The following is a 139-amino-acid chain: Holo-[acyl-carrier-protein] synthase (139 aa).

2 residues coordinate Mg(2+): aspartate 8 and glutamate 57.

The protein belongs to the P-Pant transferase superfamily. AcpS family. It depends on Mg(2+) as a cofactor.

It localises to the cytoplasm. The enzyme catalyses apo-[ACP] + CoA = holo-[ACP] + adenosine 3',5'-bisphosphate + H(+). Transfers the 4'-phosphopantetheine moiety from coenzyme A to a Ser of acyl-carrier-protein. The chain is Holo-[acyl-carrier-protein] synthase from Sinorhizobium medicae (strain WSM419) (Ensifer medicae).